The chain runs to 212 residues: DNA-directed RNA polymerase III subunit RPC8 (212 aa).

Ser-162 is modified (phosphoserine). Positions 166 to 184 (RELEERAQLENEIEGKNEE) are enriched in basic and acidic residues. The tract at residues 166–194 (RELEERAQLENEIEGKNEETPQNEKPPAY) is disordered.

Belongs to the eukaryotic RPB7/RPC8 RNA polymerase subunit family. Component of the RNA polymerase III (Pol III) complex consisting of 17 subunits. RPC25/RPC8 and RPC17/RPC9 form a Pol III subcomplex.

The protein localises to the nucleus. In terms of biological role, DNA-dependent RNA polymerase catalyzes the transcription of DNA into RNA using the four ribonucleoside triphosphates as substrates. Specific peripheric component of RNA polymerase III which synthesizes small RNAs, such as 5S rRNA and tRNA. The RPC25/RPC8-RPC17/RPC9 subcomplex may bind Pol III transcripts emerging from the adjacent exit pore during elongation. The protein is DNA-directed RNA polymerase III subunit RPC8 (RPC25) of Saccharomyces cerevisiae (strain ATCC 204508 / S288c) (Baker's yeast).